The sequence spans 104 residues: L-rhamnose mutarotase (104 aa).

Tyr-18 is a binding site for substrate. His-22 serves as the catalytic Proton donor. Residues Tyr-41 and 76–77 (WW) contribute to the substrate site.

The protein belongs to the rhamnose mutarotase family. Homodimer.

It localises to the cytoplasm. It carries out the reaction alpha-L-rhamnose = beta-L-rhamnose. It participates in carbohydrate metabolism; L-rhamnose metabolism. In terms of biological role, involved in the anomeric conversion of L-rhamnose. The polypeptide is L-rhamnose mutarotase (Mannheimia succiniciproducens (strain KCTC 0769BP / MBEL55E)).